Here is a 797-residue protein sequence, read N- to C-terminus: Ent-atiserene synthase KSL1, chloroplastic (797 aa).

The N-terminal 48 residues, 1–48 (LVKDDMSLILSSFSLFRSSRSSPASASLAGSGHPRTTPPKIASLQSPM), are a transit peptide targeting the chloroplast. Over residues 21–32 (SSPASASLAGSG) the composition is skewed to low complexity. The interval 21–47 (SSPASASLAGSGHPRTTPPKIASLQSP) is disordered. Mg(2+) is bound by residues D547, D551, N691, and E699. Positions 547–551 (DDLFD) match the DDXXD motif motif.

Belongs to the terpene synthase family. Mg(2+) serves as cofactor.

The protein resides in the plastid. It is found in the chloroplast. The catalysed reaction is ent-copalyl diphosphate = ent-atiserene + diphosphate. It participates in secondary metabolite biosynthesis; terpenoid biosynthesis. Involved in the biosynthesis of ent-kaurene diterpenoids natural products such as oridonin, miltiradiene, eriocalyxin B and nezukol, known to exhibit antitumor, anti-inflammatory and antibacterial activities. Catalyzes the conversion of ent-copalyl diphosphate (ent-CPP) to ent-atiserene. The protein is Ent-atiserene synthase KSL1, chloroplastic of Isodon japonicus (Scutellaria japonica).